Consider the following 486-residue polypeptide: Malonate-semialdehyde dehydrogenase (486 aa).

Positions 154, 178, 181, 182, and 231 each coordinate NAD(+). Residue cysteine 286 is the Nucleophile of the active site. Glutamate 386 serves as a coordination point for NAD(+).

Belongs to the aldehyde dehydrogenase family. IolA subfamily. In terms of assembly, homotetramer.

It catalyses the reaction 3-oxopropanoate + NAD(+) + CoA + H2O = hydrogencarbonate + acetyl-CoA + NADH + H(+). The catalysed reaction is 2-methyl-3-oxopropanoate + NAD(+) + CoA + H2O = propanoyl-CoA + hydrogencarbonate + NADH + H(+). It functions in the pathway polyol metabolism; myo-inositol degradation into acetyl-CoA; acetyl-CoA from myo-inositol: step 7/7. Its function is as follows. Catalyzes the oxidation of malonate semialdehyde (MSA) and methylmalonate semialdehyde (MMSA) into acetyl-CoA and propanoyl-CoA, respectively. Is involved in a myo-inositol catabolic pathway. Bicarbonate, and not CO2, is the end-product of the enzymatic reaction. The protein is Malonate-semialdehyde dehydrogenase of Bacillus cereus (strain B4264).